A 132-amino-acid polypeptide reads, in one-letter code: MPEAKPGLQLELLELLLVGAGAVPGALLRWQLALYLGDQNLLVNVLGAALLGFLSGLPAAPRRQLLLGIGFCGSVTTFSSWMLAAVKHLSAGDWAAALGLIGLTLGLGLGAAALGFNLGRRLKPPEPPQSPT.

Helical transmembrane passes span 8–28 (LQLELLELLLVGAGAVPGALL), 41–61 (LLVNVLGAALLGFLSGLPAAP), 66–86 (LLGIGFCGSVTTFSSWMLAAV), and 96–116 (AALGLIGLTLGLGLGAAALGF). Residues glycine 73 and threonine 76 each contribute to the Na(+) site.

This sequence belongs to the fluoride channel Fluc/FEX (TC 1.A.43) family.

It localises to the cell inner membrane. It carries out the reaction fluoride(in) = fluoride(out). With respect to regulation, na(+) is not transported, but it plays an essential structural role and its presence is essential for fluoride channel function. Functionally, fluoride-specific ion channel. Important for reducing fluoride concentration in the cell, thus reducing its toxicity. The chain is Fluoride-specific ion channel FluC 2 from Synechococcus sp. (strain CC9605).